Consider the following 380-residue polypeptide: Queuine tRNA-ribosyltransferase (380 aa).

Asp-96 serves as the catalytic Proton acceptor. Substrate contacts are provided by residues 96–100 (DSGGF), Asp-150, Gln-193, and Gly-220. Residues 251–257 (GVGAPDS) form an RNA binding region. Asp-270 (nucleophile) is an active-site residue. Residues 275–279 (TRIAR) are RNA binding; important for wobble base 34 recognition. Residues Cys-308, Cys-310, Cys-313, and His-339 each contribute to the Zn(2+) site.

This sequence belongs to the queuine tRNA-ribosyltransferase family. Homodimer. Within each dimer, one monomer is responsible for RNA recognition and catalysis, while the other monomer binds to the replacement base PreQ1. It depends on Zn(2+) as a cofactor.

The catalysed reaction is 7-aminomethyl-7-carbaguanine + guanosine(34) in tRNA = 7-aminomethyl-7-carbaguanosine(34) in tRNA + guanine. Its pathway is tRNA modification; tRNA-queuosine biosynthesis. In terms of biological role, catalyzes the base-exchange of a guanine (G) residue with the queuine precursor 7-aminomethyl-7-deazaguanine (PreQ1) at position 34 (anticodon wobble position) in tRNAs with GU(N) anticodons (tRNA-Asp, -Asn, -His and -Tyr). Catalysis occurs through a double-displacement mechanism. The nucleophile active site attacks the C1' of nucleotide 34 to detach the guanine base from the RNA, forming a covalent enzyme-RNA intermediate. The proton acceptor active site deprotonates the incoming PreQ1, allowing a nucleophilic attack on the C1' of the ribose to form the product. After dissociation, two additional enzymatic reactions on the tRNA convert PreQ1 to queuine (Q), resulting in the hypermodified nucleoside queuosine (7-(((4,5-cis-dihydroxy-2-cyclopenten-1-yl)amino)methyl)-7-deazaguanosine). The chain is Queuine tRNA-ribosyltransferase from Streptococcus gordonii (strain Challis / ATCC 35105 / BCRC 15272 / CH1 / DL1 / V288).